The following is a 1383-amino-acid chain: DNA-directed RNA polymerase subunit beta (1383 aa).

It belongs to the RNA polymerase beta chain family. In terms of assembly, the RNAP catalytic core consists of 2 alpha, 1 beta, 1 beta' and 1 omega subunit. When a sigma factor is associated with the core the holoenzyme is formed, which can initiate transcription.

It carries out the reaction RNA(n) + a ribonucleoside 5'-triphosphate = RNA(n+1) + diphosphate. Functionally, DNA-dependent RNA polymerase catalyzes the transcription of DNA into RNA using the four ribonucleoside triphosphates as substrates. The polypeptide is DNA-directed RNA polymerase subunit beta (Anaplasma phagocytophilum (strain HZ)).